The following is a 466-amino-acid chain: MRLLGRYLRLGSPRLCSRVWPTLPPSCSPHSTAAAAQAQGALSFSDGGVFKLKSSWEVARGLLIFRMCSFPSLVKHSEKMLSVSRRLLGRRLFEWGMKGSVYGQFVAGETLPEIRVCVDRLRQLGIHPMLAVPIEEDLGQAKSGERWYEQNESIMLDCVDLSAAGGDRPMMQLKITALMSAELCKLLSVHLSHPSNGPQLCPRSIVSIMEGKESAFSFLSEGENSHLRNSVRRLSRIAKHATANRVRVLVDAEYTYMNPALSLVTMAMMSQCNQSEPWIWNTYQCYLKDSFSLLSLDLDTARSLGLCFGVKLVRGAYMDKERKLSKQKGYADPIQHDWEATNRSYQRSLDKMLDLIGQNGQRHNLIVASHNEESVLHAVTRMAELGIDKGSGSVSFGQLLGMCDHVSLTLGQAGYLVYKSLPYGSVDSVLPYLIRRAQENQSVLQGIRKERDLLRRELKRRLFNQR.

It belongs to the proline oxidase family. It depends on FAD as a cofactor.

It carries out the reaction trans-4-hydroxy-L-proline + a quinone = (3R,5S)-1-pyrroline-3-hydroxy-5-carboxylate + a quinol + H(+). It catalyses the reaction L-proline + a quinone = (S)-1-pyrroline-5-carboxylate + a quinol + H(+). The protein operates within amino-acid degradation; L-proline degradation into L-glutamate; L-glutamate from L-proline: step 1/2. Functionally, dehydrogenase that converts trans-4-L-hydroxyproline to delta-1-pyrroline-3-hydroxy-5-carboxylate (Hyp) using a quinone as the terminal electron acceptor. Can also use proline as a substrate but with a very much lower efficiency. Does not react with other diastereomers of Hyp: trans-4-D-hydroxyproline and cis-4-L-hydroxyproline. This is Hydroxyproline dehydrogenase (prodh2) from Xenopus laevis (African clawed frog).